The sequence spans 160 residues: Dihydrofolate reductase (160 aa).

Residues 1–160 (MVKAIWAMDQ…KVAYYHKIAR (160 aa)) form the DHFR domain. 5-7 (IWA) contributes to the substrate binding site. NADP(+)-binding positions include 6-7 (WA) and 14-19 (IGNGNS). 2 residues coordinate substrate: Glu27 and Arg32. 43-46 (GSAT) is an NADP(+) binding site. Substrate is bound at residue Arg57. NADP(+) is bound by residues 62–65 (LTRN) and 101–106 (CGGAQV). Residue Ser120 coordinates substrate.

Belongs to the dihydrofolate reductase family.

The catalysed reaction is (6S)-5,6,7,8-tetrahydrofolate + NADP(+) = 7,8-dihydrofolate + NADPH + H(+). It participates in cofactor biosynthesis; tetrahydrofolate biosynthesis; 5,6,7,8-tetrahydrofolate from 7,8-dihydrofolate: step 1/1. Key enzyme in folate metabolism. Catalyzes an essential reaction for de novo glycine and purine synthesis, and for DNA precursor synthesis. This Mycoplasma pneumoniae (strain ATCC 29342 / M129 / Subtype 1) (Mycoplasmoides pneumoniae) protein is Dihydrofolate reductase (folA).